Reading from the N-terminus, the 154-residue chain is Myoglobin (154 aa).

A Globin domain is found at 2–148 (GLSDGEWHLV…FRNDIAAKYK (147 aa)). A Phosphoserine modification is found at Ser-4. His-65 serves as a coordination point for nitrite. O2 is bound at residue His-65. At Thr-68 the chain carries Phosphothreonine. His-94 contacts heme b.

The protein belongs to the globin family. Monomeric.

It is found in the cytoplasm. The protein localises to the sarcoplasm. It catalyses the reaction Fe(III)-heme b-[protein] + nitric oxide + H2O = Fe(II)-heme b-[protein] + nitrite + 2 H(+). The enzyme catalyses H2O2 + AH2 = A + 2 H2O. Its function is as follows. Monomeric heme protein which primary function is to store oxygen and facilitate its diffusion within muscle tissues. Reversibly binds oxygen through a pentacoordinated heme iron and enables its timely and efficient release as needed during periods of heightened demand. Depending on the oxidative conditions of tissues and cells, and in addition to its ability to bind oxygen, it also has a nitrite reductase activity whereby it regulates the production of bioactive nitric oxide. Under stress conditions, like hypoxia and anoxia, it also protects cells against reactive oxygen species thanks to its pseudoperoxidase activity. This is Myoglobin (MB) from Halichoerus grypus (Gray seal).